The sequence spans 1378 residues: DNA-directed RNA polymerase subunit beta (1378 aa).

This sequence belongs to the RNA polymerase beta chain family. In terms of assembly, the RNAP catalytic core consists of 2 alpha, 1 beta, 1 beta' and 1 omega subunit. When a sigma factor is associated with the core the holoenzyme is formed, which can initiate transcription.

The enzyme catalyses RNA(n) + a ribonucleoside 5'-triphosphate = RNA(n+1) + diphosphate. Its function is as follows. DNA-dependent RNA polymerase catalyzes the transcription of DNA into RNA using the four ribonucleoside triphosphates as substrates. The protein is DNA-directed RNA polymerase subunit beta of Agrobacterium fabrum (strain C58 / ATCC 33970) (Agrobacterium tumefaciens (strain C58)).